The chain runs to 100 residues: Guanine nucleotide-binding protein subunit gamma 2 (100 aa).

M1 carries the post-translational modification N-acetylmethionine. Residues 19-55 adopt a coiled-coil conformation; the sequence is TRGKHRIQAELKRLEQEARFLEEELEQLEKMDNASAS. The G protein gamma domain maps to 21 to 100; the sequence is GKHRIQAELK…EAKRCGCSIL (80 aa). A regulates lipidation and cell membrane subcellular localization region spans residues 90-96; that stretch reads KEAKRCG. Residue C95 is the site of S-palmitoyl cysteine attachment. C97 is modified (cysteine methyl ester). C97 is lipidated: S-farnesyl cysteine. A propeptide spans 98 to 100 (removed in mature form); the sequence is SIL.

As to quaternary structure, g proteins are composed of 3 units, alpha, beta and gamma. GPG1 interacts with the beta subunit GB1. The dimer GB1-GG2 interacts with NDL1, NDL2 and NDL3. Binds to NUDT7. As to expression, mostly expressed in roots (excluded from the stele), seedlings (especially at the hypocotyl/root junction), floral stems, floral buds, flowers and siliques, and, to a lower extent, in leaves (restricted to guard cells). Also present in hydathods.

Its subcellular location is the cell membrane. Its function is as follows. Guanine nucleotide-binding proteins (G proteins) are involved as a modulator or transducer in various transmembrane signaling systems. The beta and gamma chains are required for the GTPase activity, for replacement of GDP by GTP, and for G protein-effector interaction. Involved in the abscisic acid (ABA) and ethylene signaling pathways. Regulates basipetal transport of auxin (IAA) in roots and hypocotyls, and thus modulates root architecture (e.g. lateral root formation). The heterotrimeric G-protein controls defense responses to necrotrophic and vascular fungi probably by modulating cell wall-related genes expression; involved in resistance to Plectosphaerella cucumerina. The chain is Guanine nucleotide-binding protein subunit gamma 2 (GG2) from Arabidopsis thaliana (Mouse-ear cress).